The primary structure comprises 374 residues: PqqA peptide cyclase (374 aa).

The region spanning 7–222 is the Radical SAM core domain; it reads VTPPLWLLAE…VADYRQRMGA (216 aa). Positions 21, 25, and 28 each coordinate [4Fe-4S] cluster.

It belongs to the radical SAM superfamily. PqqE family. As to quaternary structure, interacts with PqqD. The interaction is necessary for activity of PqqE. [4Fe-4S] cluster is required as a cofactor.

The enzyme catalyses [PQQ precursor protein] + S-adenosyl-L-methionine = E-Y cross-linked-[PQQ precursor protein] + 5'-deoxyadenosine + L-methionine + H(+). It functions in the pathway cofactor biosynthesis; pyrroloquinoline quinone biosynthesis. Catalyzes the cross-linking of a glutamate residue and a tyrosine residue in the PqqA protein as part of the biosynthesis of pyrroloquinoline quinone (PQQ). The chain is PqqA peptide cyclase from Kluyvera intermedia (Enterobacter intermedius).